Here is an 899-residue protein sequence, read N- to C-terminus: Translation initiation factor IF-2 (899 aa).

Disordered regions lie at residues 116-135 (AKAR…ARLQ), 170-189 (RGGG…EQKK), and 262-306 (DREI…ANKH). In terms of domain architecture, tr-type G spans 399–568 (TRPPVVTIMG…LIQSELMELK (170 aa)). The tract at residues 408–415 (GHVDHGKT) is G1. GTP is bound at residue 408-415 (GHVDHGKT). Residues 433–437 (GITQH) form a G2 region. Positions 454–457 (DTPG) are G3. Residues 454 to 458 (DTPGH) and 508 to 511 (NKMD) contribute to the GTP site. The segment at 508–511 (NKMD) is G4. Positions 544 to 546 (SAH) are G5.

Belongs to the TRAFAC class translation factor GTPase superfamily. Classic translation factor GTPase family. IF-2 subfamily.

It is found in the cytoplasm. Functionally, one of the essential components for the initiation of protein synthesis. Protects formylmethionyl-tRNA from spontaneous hydrolysis and promotes its binding to the 30S ribosomal subunits. Also involved in the hydrolysis of GTP during the formation of the 70S ribosomal complex. The protein is Translation initiation factor IF-2 of Acinetobacter baumannii (strain AB307-0294).